The following is a 472-amino-acid chain: NADH-quinone oxidoreductase subunit N (472 aa).

The next 14 helical transmembrane spans lie at L5–L25, A36–I56, I77–P97, F103–L123, L126–G146, L158–L178, L197–F217, P229–V249, W264–I284, M292–M309, I319–A339, A363–V383, G396–L416, and L441–A461.

This sequence belongs to the complex I subunit 2 family. In terms of assembly, NDH-1 is composed of 14 different subunits. Subunits NuoA, H, J, K, L, M, N constitute the membrane sector of the complex.

It is found in the cell membrane. The enzyme catalyses a quinone + NADH + 5 H(+)(in) = a quinol + NAD(+) + 4 H(+)(out). Its function is as follows. NDH-1 shuttles electrons from NADH, via FMN and iron-sulfur (Fe-S) centers, to quinones in the respiratory chain. The immediate electron acceptor for the enzyme in this species is believed to be a menaquinone. Couples the redox reaction to proton translocation (for every two electrons transferred, four hydrogen ions are translocated across the cytoplasmic membrane), and thus conserves the redox energy in a proton gradient. The sequence is that of NADH-quinone oxidoreductase subunit N from Heliobacterium modesticaldum (strain ATCC 51547 / Ice1).